The chain runs to 243 residues: Zinc import ATP-binding protein ZnuC (243 aa).

An ABC transporter domain is found at 8 to 225 (LNLSNVSYYI…SEFQKLFGHH (218 aa)). 40–47 (GPNGAGKS) provides a ligand contact to ATP.

This sequence belongs to the ABC transporter superfamily. Zinc importer (TC 3.A.1.15.5) family. The complex is composed of two ATP-binding proteins (ZnuC), two transmembrane proteins (ZnuB) and a solute-binding protein (ZnuA).

The protein localises to the cell inner membrane. It catalyses the reaction Zn(2+)(out) + ATP(in) + H2O(in) = Zn(2+)(in) + ADP(in) + phosphate(in) + H(+)(in). Its function is as follows. Part of the ABC transporter complex ZnuABC involved in zinc import. Responsible for energy coupling to the transport system. The polypeptide is Zinc import ATP-binding protein ZnuC (Psychrobacter cryohalolentis (strain ATCC BAA-1226 / DSM 17306 / VKM B-2378 / K5)).